Consider the following 1078-residue polypeptide: Isoleucine--tRNA ligase (1078 aa).

The 'HIGH' region motif lies at 52-62; the sequence is PTANGKPALHH. Residues 637–641 carry the 'KMSKS' region motif; that stretch reads KMSKS. Residue Lys640 participates in ATP binding.

The protein belongs to the class-I aminoacyl-tRNA synthetase family. IleS type 2 subfamily. As to quaternary structure, monomer. Zn(2+) serves as cofactor.

The protein resides in the cytoplasm. The catalysed reaction is tRNA(Ile) + L-isoleucine + ATP = L-isoleucyl-tRNA(Ile) + AMP + diphosphate. Its function is as follows. Catalyzes the attachment of isoleucine to tRNA(Ile). As IleRS can inadvertently accommodate and process structurally similar amino acids such as valine, to avoid such errors it has two additional distinct tRNA(Ile)-dependent editing activities. One activity is designated as 'pretransfer' editing and involves the hydrolysis of activated Val-AMP. The other activity is designated 'posttransfer' editing and involves deacylation of mischarged Val-tRNA(Ile). The chain is Isoleucine--tRNA ligase from Deinococcus radiodurans (strain ATCC 13939 / DSM 20539 / JCM 16871 / CCUG 27074 / LMG 4051 / NBRC 15346 / NCIMB 9279 / VKM B-1422 / R1).